The primary structure comprises 475 residues: Ribulose bisphosphate carboxylase large chain (475 aa).

The propeptide occupies 1-2 (MS). P3 is subject to N-acetylproline. K14 bears the N6,N6,N6-trimethyllysine mark. Residues N123 and T173 each contribute to the substrate site. The active-site Proton acceptor is the K175. Position 177 (K177) interacts with substrate. Residues K201, D203, and E204 each contribute to the Mg(2+) site. K201 is subject to N6-carboxylysine. Catalysis depends on H294, which acts as the Proton acceptor. H327 and S379 together coordinate substrate.

This sequence belongs to the RuBisCO large chain family. Type I subfamily. Heterohexadecamer of 8 large chains and 8 small chains; disulfide-linked. The disulfide link is formed within the large subunit homodimers. Requires Mg(2+) as cofactor. In terms of processing, the disulfide bond which can form in the large chain dimeric partners within the hexadecamer appears to be associated with oxidative stress and protein turnover.

The protein resides in the plastid. It is found in the chloroplast. It catalyses the reaction 2 (2R)-3-phosphoglycerate + 2 H(+) = D-ribulose 1,5-bisphosphate + CO2 + H2O. It carries out the reaction D-ribulose 1,5-bisphosphate + O2 = 2-phosphoglycolate + (2R)-3-phosphoglycerate + 2 H(+). RuBisCO catalyzes two reactions: the carboxylation of D-ribulose 1,5-bisphosphate, the primary event in carbon dioxide fixation, as well as the oxidative fragmentation of the pentose substrate in the photorespiration process. Both reactions occur simultaneously and in competition at the same active site. In Amaranthus hypochondriacus (Prince-of-Wales feather), this protein is Ribulose bisphosphate carboxylase large chain.